Here is a 93-residue protein sequence, read N- to C-terminus: Large ribosomal subunit protein eL29 (93 aa).

Basic residues predominate over residues 1-31; the sequence is MAKSKNHSTHHKNRKDHRNGIKKAVVHKKTS. Positions 1–33 are disordered; sequence MAKSKNHSTHHKNRKDHRNGIKKAVVHKKTSSK.

The protein belongs to the eukaryotic ribosomal protein eL29 family.

In Dictyostelium discoideum (Social amoeba), this protein is Large ribosomal subunit protein eL29 (rpl29).